Here is a 483-residue protein sequence, read N- to C-terminus: Cobyric acid synthase (483 aa).

Positions 252 to 439 (KLNVVVPVLT…LHGFFDEAEA (188 aa)) constitute a GATase cobBQ-type domain. Cys333 acts as the Nucleophile in catalysis. His431 is an active-site residue.

Belongs to the CobB/CobQ family. CobQ subfamily.

It functions in the pathway cofactor biosynthesis; adenosylcobalamin biosynthesis. Functionally, catalyzes amidations at positions B, D, E, and G on adenosylcobyrinic A,C-diamide. NH(2) groups are provided by glutamine, and one molecule of ATP is hydrogenolyzed for each amidation. The chain is Cobyric acid synthase from Vibrio parahaemolyticus serotype O3:K6 (strain RIMD 2210633).